Consider the following 689-residue polypeptide: Small ribosomal subunit protein mS39 (689 aa).

The N-terminal 37 residues, 1-37, are a transit peptide targeting the mitochondrion; the sequence is MAVVSAVRWLGLRSRLGQPLTGRRAGLCEQARSCRFY. Residue Lys126 is modified to N6-acetyllysine. 10 PPR repeats span residues 149–183, 184–219, 255–289, 290–330, 331–367, 368–409, 412–446, 454–488, 489–523, and 572–606; these read IKDI…GTTV, SLET…EALE, NEHS…RLHA, DVYT…KVKP, NLQT…GIEP, SLAT…SPKD, DDKF…DNWK, RNFY…AYFP, HSQT…GHTF, and PATS…NKIP. Residues 665 to 689 are disordered; sequence NLTALTSDSDTDSSSDSDSDTSEGK. Acidic residues predominate over residues 673 to 689; the sequence is SDTDSSSDSDSDTSEGK.

This sequence belongs to the mitochondrion-specific ribosomal protein mS39 family. In terms of assembly, component of the mitochondrial small ribosomal subunit (mt-SSU). Mature mammalian 55S mitochondrial ribosomes consist of a small (28S) and a large (39S) subunit. The 28S small subunit contains a 12S ribosomal RNA (12S mt-rRNA) and 30 different proteins. The 39S large subunit contains a 16S rRNA (16S mt-rRNA), a copy of mitochondrial valine transfer RNA (mt-tRNA(Val)), which plays an integral structural role, and 52 different proteins. Associated with the 12S mitochondrial rRNA (12S mt-rRNA). As to expression, abundant in testes, skeletal muscle and heart tissue.

The protein resides in the mitochondrion. In terms of biological role, mitochondrial RNA-binding protein that has a role in mitochondrial translation. The chain is Small ribosomal subunit protein mS39 (PTCD3) from Homo sapiens (Human).